The sequence spans 304 residues: Transmembrane protein 178A (304 aa).

The N-terminal stretch at 1 to 25 (MESRGLVTAVSLTLSICSLLLLVTA) is a signal peptide. Over 26–186 (IFTDHWYETD…LLHLRRITAG (161 aa)) the chain is Extracellular. N-linked (GlcNAc...) asparagine glycosylation is present at N165. Residues 187–207 (FLGMAAAVLLCGCIVAAISFF) form a helical membrane-spanning segment. At 208–215 (WEESLTQH) the chain is on the cytoplasmic side. Residues 216–236 (VAGLLFLMTGIFCTISLCTYA) traverse the membrane as a helical segment. Residues 237 to 267 (ASVAYELNRQPKFIYGLPSDVEHGYSWSLFC) lie on the Extracellular side of the membrane. A helical transmembrane segment spans residues 268–288 (AWCSLGLIVAAGCLCTAYPFI). Residues 289–304 (SRTKILHLKFARDSCV) lie on the Cytoplasmic side of the membrane.

It belongs to the TMEM178 family.

The protein localises to the endoplasmic reticulum membrane. Its function is as follows. May act as a negative regulator of osteoclast differentiation. The sequence is that of Transmembrane protein 178A (tmem178a) from Xenopus laevis (African clawed frog).